The primary structure comprises 344 residues: DNA-directed RNA polymerase subunit alpha (344 aa).

The tract at residues 1–238 (MKVIKTAPLI…KQLGVFGERP (238 aa)) is alpha N-terminal domain (alpha-NTD). Residues 253-344 (DAKDLSAKIE…EKLEDKGGND (92 aa)) are alpha C-terminal domain (alpha-CTD).

This sequence belongs to the RNA polymerase alpha chain family. In terms of assembly, homodimer. The RNAP catalytic core consists of 2 alpha, 1 beta, 1 beta' and 1 omega subunit. When a sigma factor is associated with the core the holoenzyme is formed, which can initiate transcription.

The enzyme catalyses RNA(n) + a ribonucleoside 5'-triphosphate = RNA(n+1) + diphosphate. DNA-dependent RNA polymerase catalyzes the transcription of DNA into RNA using the four ribonucleoside triphosphates as substrates. This is DNA-directed RNA polymerase subunit alpha from Helicobacter pylori (strain HPAG1).